A 350-amino-acid polypeptide reads, in one-letter code: MTQIDLAPPASSTQPRIIDTDVAIIGAGPAGLFAAFELGMLRLRAVLIDALQEVGGQCAALYPEKPIYDIPAHPAISGGDLITALERQIAPFDMPRLLSRRVETLTGTQGDFTLTTSAGDTVCARAVVLAAGAGAFGPNRPPLDGLEAFEASGAVQYYVRRREDFRGRSVVIAGGGDSAVDWALALRGIAARIFVVHRRAKFRAAPESLAQLEQAAAAGEVELVVPYQLHGLQGAEGVLSVVEVATLDGEIRRLEADCLLPFFGLSMDLGPIAEWGLALERHHITIDPSRCETNVPGIFAIGDVATYPGKLKLILQGFSEAAMAAHAIHPIVHPDQALHFEYSTSTGVPG.

FAD-binding residues include D49, Q57, Y62, V102, F136, D303, and T344.

Belongs to the ferredoxin--NADP reductase type 2 family. In terms of assembly, homodimer. The cofactor is FAD.

It carries out the reaction 2 reduced [2Fe-2S]-[ferredoxin] + NADP(+) + H(+) = 2 oxidized [2Fe-2S]-[ferredoxin] + NADPH. This Granulibacter bethesdensis (strain ATCC BAA-1260 / CGDNIH1) protein is Ferredoxin--NADP reductase.